A 416-amino-acid polypeptide reads, in one-letter code: Lipoyl synthase, mitochondrial (416 aa).

The transit peptide at 1-33 (MAAPTRSLRRLSSFRTTISPSLTVTAPIGCRSY) directs the protein to the mitochondrion. Residues Cys-132, Cys-137, Cys-143, Cys-163, Cys-167, Cys-170, and Ser-378 each coordinate [4Fe-4S] cluster. The region spanning 148-367 (DKSSATATIM…RQRALDMGFL (220 aa)) is the Radical SAM core domain. The interval 396 to 416 (GSGTAERTVDQTAATTDEATR) is disordered. Residues 405–416 (DQTAATTDEATR) show a composition bias toward polar residues.

It belongs to the radical SAM superfamily. Lipoyl synthase family. The cofactor is [4Fe-4S] cluster.

The protein resides in the mitochondrion. It carries out the reaction [[Fe-S] cluster scaffold protein carrying a second [4Fe-4S](2+) cluster] + N(6)-octanoyl-L-lysyl-[protein] + 2 oxidized [2Fe-2S]-[ferredoxin] + 2 S-adenosyl-L-methionine + 4 H(+) = [[Fe-S] cluster scaffold protein] + N(6)-[(R)-dihydrolipoyl]-L-lysyl-[protein] + 4 Fe(3+) + 2 hydrogen sulfide + 2 5'-deoxyadenosine + 2 L-methionine + 2 reduced [2Fe-2S]-[ferredoxin]. The protein operates within protein modification; protein lipoylation via endogenous pathway; protein N(6)-(lipoyl)lysine from octanoyl-[acyl-carrier-protein]: step 2/2. Catalyzes the radical-mediated insertion of two sulfur atoms into the C-6 and C-8 positions of the octanoyl moiety bound to the lipoyl domains of lipoate-dependent enzymes, thereby converting the octanoylated domains into lipoylated derivatives. The chain is Lipoyl synthase, mitochondrial from Penicillium rubens (strain ATCC 28089 / DSM 1075 / NRRL 1951 / Wisconsin 54-1255) (Penicillium chrysogenum).